The primary structure comprises 329 residues: Zygote arrest protein 1 (329 aa).

Disordered regions lie at residues 106–132 (LRRR…RTQA) and 146–218 (FREE…DDLK). Over residues 149–162 (EGEEEEDTDLEVTE) the composition is skewed to acidic residues. Positions 166–177 (SAEKLESAEKNV) are enriched in basic and acidic residues. A 3CxxC-type zinc finger spans residues 231-314 (KYGFYHCKDC…RQDLCGRCKG (84 aa)).

The protein belongs to the ZAR1 family. As to expression, specifically expressed in ovaries but absent in testes.

It is found in the cytoplasm. It localises to the cytoplasmic ribonucleoprotein granule. Its function is as follows. mRNA-binding protein required for maternal mRNA storage, translation and degradation during oocyte maturation. Probably promotes formation of some phase-separated membraneless compartment that stores maternal mRNAs in oocytes: acts by undergoing liquid-liquid phase separation upon binding to maternal mRNAs. Binds to the 3'-UTR of zona pellucida mRNAs, inhibiting their translation. The polypeptide is Zygote arrest protein 1 (Danio rerio (Zebrafish)).